A 270-amino-acid polypeptide reads, in one-letter code: F-actin-capping protein subunit beta (270 aa).

Belongs to the F-actin-capping protein beta subunit family. Component of the F-actin capping complex, composed of a heterodimer of an alpha and a beta subunit.

It localises to the cytoplasm. The protein resides in the cytoskeleton. In terms of biological role, F-actin-capping proteins bind in a Ca(2+)-independent manner to the fast growing ends of actin filaments (barbed end) thereby blocking the exchange of subunits at these ends. Unlike other capping proteins (such as gelsolin and severin), these proteins do not sever actin filaments. The sequence is that of F-actin-capping protein subunit beta (cap-2) from Caenorhabditis elegans.